A 220-amino-acid polypeptide reads, in one-letter code: Chaperone protein TorD (220 aa).

This sequence belongs to the TorD/DmsD family. TorD subfamily.

Its subcellular location is the cytoplasm. Involved in the biogenesis of TorA. Acts on TorA before the insertion of the molybdenum cofactor and, as a result, probably favors a conformation of the apoenzyme that is competent for acquiring the cofactor. The sequence is that of Chaperone protein TorD from Vibrio cholerae serotype O1 (strain ATCC 39541 / Classical Ogawa 395 / O395).